The chain runs to 205 residues: Probable GTP-binding protein EngB (205 aa).

The 175-residue stretch at 27 to 201 folds into the EngB-type G domain; the sequence is EGMEIAFAGR…AAKLDSWFSS (175 aa). GTP contacts are provided by residues 35–42, 62–66, 80–83, 147–150, and 180–182; these read GRSNAGKS, GRTQL, DLPG, TKAD, and FSA. Positions 42 and 64 each coordinate Mg(2+).

This sequence belongs to the TRAFAC class TrmE-Era-EngA-EngB-Septin-like GTPase superfamily. EngB GTPase family. Requires Mg(2+) as cofactor.

Its function is as follows. Necessary for normal cell division and for the maintenance of normal septation. This Mannheimia succiniciproducens (strain KCTC 0769BP / MBEL55E) protein is Probable GTP-binding protein EngB.